The primary structure comprises 403 residues: Basic leucine zipper 25 (403 aa).

2 disordered regions span residues 13–128 (SFWP…APVV) and 156–259 (VKPE…EFDT). Positions 24–33 (PGSSSTPSPT) are enriched in low complexity. The segment covering 56–69 (LSGSDSSPTTNTIE) has biased composition (polar residues). 2 stretches are compositionally biased toward low complexity: residues 115–128 (APSS…APVV) and 161–174 (SSAS…AQGS). Residues 175–195 (IVAQTSPGASSVRFSPTTSTQ) are compositionally biased toward polar residues. Residues 212–226 (DSDDDDLDGDADNGD) are compositionally biased toward acidic residues. Serine 213 is modified (phosphoserine). A bZIP domain is found at 229–292 (DVKRARRMLS…DAAAVDNRIL (64 aa)). The tract at residues 231-250 (KRARRMLSNRESARRSRRRK) is basic motif. Residues 233–240 (ARRMLSNR) carry the Nuclear localization signal motif. Residues 264 to 271 (LRAEHSTL) form a leucine-zipper region. Over residues 332–345 (NTPSASSSIPPNSN) the composition is skewed to low complexity. 2 disordered regions span residues 332–361 (NTPS…SAGL) and 380–403 (EGMQ…NHKH). Residues 351-361 (ANSSTNTSAGL) are compositionally biased toward polar residues.

The protein belongs to the bZIP family. In terms of assembly, homodimer. Forms a heterodimer with BZIP1, BZIP1, BZIP2, BZIP9, BZIP11, BZIP44, BZIP53 and BZIP63. Interacts with ABI3 and forms a complex made of ABI3, BZIP53 and BZIP25. In terms of tissue distribution, expressed in roots, shoots, stems, leaves, stipulae, siliques, seeds, pollen, and flowers.

The protein localises to the nucleus. Its function is as follows. Transcription factor that binds to the 5'-ACGT-3' box, especially present in G-box-like motif (5'-CCACGTGGCC-3'), ABRE elements, of seed storage protein (SSP) encoding gene promoters (e.g. At2S and CRU3) and promotes their expression in seeds when in complex with ABI3 and BZIP53. The protein is Basic leucine zipper 25 (BZIP25) of Arabidopsis thaliana (Mouse-ear cress).